The chain runs to 1978 residues: Sodium channel protein type 8 subunit alpha (1978 aa).

Disordered regions lie at residues 1 to 20 and 28 to 62; these read MAAR…FTPE and RIAE…LEAG. The Cytoplasmic portion of the chain corresponds to 1 to 132; sequence MAARVLAPPG…RIAIKILIHS (132 aa). Basic and acidic residues predominate over residues 28–61; it reads RIAESKLKKPPKADGSHREDDEDSKPKPNSDLEA. The I repeat unit spans residues 114-442; it reads ILSPFNLIRR…KAMLEQLKKQ (329 aa). Residues 133-151 traverse the membrane as a helical segment; sequence VFSMIIMCTILTNCVFMTF. The Extracellular segment spans residues 152–158; sequence SNPPEWS. The helical transmembrane segment at 159 to 179 threads the bilayer; the sequence is KNVEYTFTGIYTFESLVKIIA. Over 180 to 193 the chain is Cytoplasmic; that stretch reads RGFCIDGFTFLRDP. The chain crosses the membrane as a helical span at residues 194 to 211; sequence WNWLDFSVIMMAYVTEFV. The Extracellular portion of the chain corresponds to 212-217; that stretch reads DLGNVS. A glycan (N-linked (GlcNAc...) asparagine) is linked at Asn215. The helical transmembrane segment at 218–234 threads the bilayer; it reads ALRTFRVLRALKTISVI. The Cytoplasmic segment spans residues 235-253; it reads PGLKTIVGALIQSVKKLSD. Residues 254-273 form a helical membrane-spanning segment; that stretch reads VMILTVFCLSVFALIGLQLF. Over 274-355 the chain is Extracellular; that stretch reads MGNLRNKCVV…PNYGYTSFDT (82 aa). Cys281 and Cys333 are joined by a disulfide. N-linked (GlcNAc...) asparagine glycans are attached at residues Asn289, Asn295, Asn308, and Asn326. The segment at residues 356–380 is an intramembrane region (pore-forming); sequence FSWAFLALFRLMTQDYWENLYQLTL. Residue Glu373 participates in Na(+) binding. Over 381–387 the chain is Extracellular; that stretch reads RAAGKTY. Residues 388–408 traverse the membrane as a helical segment; that stretch reads MIFFVLVIFVGSFYLVNLILA. Residues 409–751 lie on the Cytoplasmic side of the membrane; sequence VVAMAYEEQN…EIVNLIVMDP (343 aa). Disordered regions lie at residues 446-530 and 576-597; these read AQAA…KAFR and DPGS…SEGR. The segment covering 473-486 has biased composition (low complexity); that stretch reads SPRSSSELSKLSSK. The span at 489 to 500 shows a compositional bias: basic residues; the sequence is KERRNRRKKRKQ. 2 stretches are compositionally biased toward basic and acidic residues: residues 501 to 530 and 586 to 597; these read KELS…KAFR and DEHSTVEESEGR. Residues Ser518 and Ser520 each carry the phosphoserine modification. The stretch at 733-1005 is one II repeat; it reads CHPYWIKLKE…QISVIRIKKG (273 aa). The chain crosses the membrane as a helical span at residues 752–770; sequence FVDLAITICIVLNTLFMAM. At 771-781 the chain is on the extracellular side; the sequence is EHHPMTPQFEH. Residues 782-801 traverse the membrane as a helical segment; the sequence is VLAVGNLVFTGIFTAEMFLK. Residues 802 to 815 lie on the Cytoplasmic side of the membrane; it reads LIAMDPYYYFQEGW. The chain crosses the membrane as a helical span at residues 816 to 835; sequence NIFDGFIVSLSLMELGLADV. Residues 836 to 837 lie on the Extracellular side of the membrane; that stretch reads EG. A helical transmembrane segment spans residues 838–855; the sequence is LSVLRSFRLLRVFKLAKS. At 856–871 the chain is on the cytoplasmic side; sequence WPTLNMLIKIIGNSVG. Residues 872 to 890 traverse the membrane as a helical segment; sequence ALGNLTLVLAIIVFIFAVV. The Extracellular portion of the chain corresponds to 891–919; the sequence is GMQLFGKSYKECVCKISQECKLPRWHMND. Cys904 and Cys910 are disulfide-bonded. Residues 920-940 constitute an intramembrane region (pore-forming); sequence FFHSFLIVFRVLCGEWIETMW. Residues Glu934 and Glu937 each contribute to the Na(+) site. At 941–953 the chain is on the extracellular side; that stretch reads DCMEVAGQAMCLI. Cys942 and Cys951 are disulfide-bonded. A helical membrane pass occupies residues 954–974; the sequence is VFMMVMVIGNLVVLNLFLALL. Over 975 to 1197 the chain is Cytoplasmic; that stretch reads LSSFSADNLA…TCFLIVEHNW (223 aa). Residues 1105-1146 form a disordered region; sequence NLNTEDVSSESDPEGSKDKLDDTSSSEGSTIDIKPEVEEVPV. The stretch at 1178-1493 is one III repeat; the sequence is LGKSWWILRK…KKYYNAMKKL (316 aa). Residues 1198–1215 form a helical membrane-spanning segment; the sequence is FETFIIFMILLSSGALAF. The Extracellular segment spans residues 1216–1228; sequence EDIYIEQRKTIRT. The chain crosses the membrane as a helical span at residues 1229-1247; it reads ILEYADKVFTYIFILEMLL. At 1248 to 1261 the chain is on the cytoplasmic side; it reads KWTAYGFVKFFTNA. A helical membrane pass occupies residues 1262 to 1280; the sequence is WCWLDFLIVAVSLVSLIAN. At 1281–1288 the chain is on the extracellular side; it reads ALGYSELG. Residues 1289–1307 traverse the membrane as a helical segment; the sequence is AIKSLRTLRALRPLRALSR. The Cytoplasmic segment spans residues 1308–1324; sequence FEGMRVVVNALVGAIPS. The helical transmembrane segment at 1325 to 1344 threads the bilayer; it reads IMNVLLVCLIFWLIFSIMGV. The Extracellular segment spans residues 1345-1397; sequence NLFAGKYHYCFNETSEIRFEIDEVNNKTDCEKLMEGNNTEIRWKNVKINFDNV. Cysteines 1354 and 1374 form a disulfide. Asn1356, Asn1370, and Asn1381 each carry an N-linked (GlcNAc...) asparagine glycan. An intramembrane region (pore-forming) is located at residues 1398-1419; that stretch reads GAGYLALLQVATFKGWMDIMYA. At 1420-1436 the chain is on the extracellular side; that stretch reads AVDSRKPDEQPDYEGNI. A helical membrane pass occupies residues 1437-1458; it reads YMYIYFVIFIIFGSFFTLNLFI. Over 1459-1521 the chain is Cytoplasmic; sequence GVIIDNFNQQ…IVFDFVTQQA (63 aa). Ser1495 is subject to Phosphoserine; by PKC. The stretch at 1502–1799 is one IV repeat; sequence IPRPLNKIQG…WEKFDPDATQ (298 aa). Residues 1522-1539 form a helical membrane-spanning segment; the sequence is FDIVIMMLICLNMVTMMV. Residues 1540–1550 are Extracellular-facing; sequence ETDTQSKQMEN. Residues 1551 to 1569 form a helical membrane-spanning segment; it reads ILYWINLVFVIFFTCECVL. Residues 1570 to 1581 are Cytoplasmic-facing; it reads KMFALRHYYFTI. The chain crosses the membrane as a helical span at residues 1582-1599; the sequence is GWNIFDFVVVILSIVGMF. Over 1600–1612 the chain is Extracellular; that stretch reads LADIIEKYFVSPT. A helical membrane pass occupies residues 1613-1629; the sequence is LFRVIRLARIGRILRLI. Residues 1630–1648 lie on the Cytoplasmic side of the membrane; it reads KGAKGIRTLLFALMMSLPA. Residues 1649–1666 form a helical membrane-spanning segment; it reads LFNIGLLLFLVMFIFSIF. Residues 1667–1688 lie on the Extracellular side of the membrane; the sequence is GMSNFAYVKHEAGIDDMFNFET. The pore-forming intramembrane region spans 1689–1711; it reads FGNSMICLFQITTSAGWDGLLLP. The Extracellular segment spans residues 1712–1740; sequence ILNRPPDCSLDKEHPGSGFKGDCGNPSVG. A disulfide bridge links Cys1719 with Cys1734. The helical transmembrane segment at 1741–1763 threads the bilayer; that stretch reads IFFFVSYIIISFLIVVNMYIAII. At 1764-1978 the chain is on the cytoplasmic side; that stretch reads LENFSVATEE…RQKEVRESKC (215 aa). The IQ domain maps to 1893 to 1922; it reads EEVSAVVLQRAYRGHLARRGFICRKITSNK. The interval 1924-1978 is disordered; that stretch reads ENGGTHREKKESTPSTASLPSYDSVTKPDKEKQQRAEEGRRERAKRQKEVRESKC. A compositionally biased stretch (polar residues) spans 1936–1947; the sequence is TPSTASLPSYDS. Positions 1949–1978 are enriched in basic and acidic residues; the sequence is TKPDKEKQQRAEEGRRERAKRQKEVRESKC.

It belongs to the sodium channel (TC 1.A.1.10) family. Nav1.6/SCN8A subfamily. In terms of assembly, the voltage-sensitive sodium channel consists of an ion-conducting pore-forming alpha subunit regulated by one or more beta-1 (SCN1B), beta-2 (SCN2B), beta-3 (SCN3B) and/or beta-4 (SCN4B) subunits. Beta-1 (SCN1B) and beta-3 (SCN3B) are non-covalently associated with alpha, while beta-2 (SCN2B) and beta-4 (SCN4B) are covalently linked by disulfide bonds. Interacts with FGF13. Interacts with NEDD4 and NEDD4L. Interacts with FGF14, GBG3, GBB2 and SCN1B. Interacts with TMEM233. Interacts with the conotoxin GVIIJ. Interacts with the scorpion toxin BMK M1. Interacts with CALM1; the interaction modulates the inactivation rate of SCN8A. In terms of processing, may be ubiquitinated by NEDD4L; which would promote its endocytosis. Post-translationally, phosphorylation at Ser-1495 by PKC in a highly conserved cytoplasmic loop slows inactivation of the sodium channel and reduces peak sodium currents. Expressed in the hippocampus (at protein level). Expressed in brain, cerebellum and spinal cord. As to expression, expressed in non-neuronal tissues, such as monocytes/macrophages.

It is found in the cell membrane. Its subcellular location is the cell projection. It localises to the axon. The protein resides in the cytoplasmic vesicle. The protein localises to the podosome. It carries out the reaction Na(+)(in) = Na(+)(out). Functionally, pore-forming subunit of a voltage-gated sodium channel complex assuming opened or closed conformations in response to the voltage difference across membranes and through which sodium ions selectively pass along their electrochemical gradient. Contributes to neuronal excitability by regulating action potential threshold and propagation. Its function is as follows. More specifically expressed in non-neuronal cells, could play a role in sodium release from intracellular compartments and participate in the control of podosomes formation and macrophages adhesion and movement. In Mus musculus (Mouse), this protein is Sodium channel protein type 8 subunit alpha.